The sequence spans 294 residues: uncharacterized protein (294 aa).

2 disordered regions span residues Val-25–Arg-59 and Leu-77–Pro-141. The segment covering Tyr-86–Glu-139 has biased composition (acidic residues). Residues Ile-201–Lys-234 adopt a coiled-coil conformation. Positions Thr-242–Asp-259 are enriched in basic and acidic residues. Residues Thr-242–Glu-294 form a disordered region. Positions Ile-260 to Glu-283 are enriched in acidic residues.

This is an uncharacterized protein from Magallana gigas (Pacific oyster).